A 707-amino-acid polypeptide reads, in one-letter code: E3 ubiquitin-protein ligase MARCHF7 (707 aa).

M1 carries the N-acetylmethionine modification. Disordered stretches follow at residues M1–R126, L157–T279, F294–E343, S361–R425, and A444–T473. Over residues S17–L33 the composition is skewed to low complexity. Over residues Y37–S48 the composition is skewed to basic and acidic residues. Residues S52–A65 are compositionally biased toward low complexity. Polar residues-rich tracts occupy residues W66–Q83, S95–R126, N189–I212, and I254–S270. Residues F294–S303 are compositionally biased toward low complexity. Composition is skewed to polar residues over residues L304–V336, F373–N392, and I412–S421. S317 and S389 each carry phosphoserine. Low complexity predominate over residues A444–G470. The RING-CH-type zinc finger occupies S544 to N614. Residues C552, C555, C570, C572, H580, C583, C604, and C607 each coordinate Zn(2+). T686 carries the post-translational modification Phosphothreonine. Phosphoserine is present on residues S687 and S691.

The protein localises to the cytoplasm. The catalysed reaction is S-ubiquitinyl-[E2 ubiquitin-conjugating enzyme]-L-cysteine + [acceptor protein]-L-lysine = [E2 ubiquitin-conjugating enzyme]-L-cysteine + N(6)-ubiquitinyl-[acceptor protein]-L-lysine.. It participates in protein modification; protein ubiquitination. Its function is as follows. E3 ubiquitin-protein ligase which may specifically enhance the E2 activity of HIP2. E3 ubiquitin ligases accept ubiquitin from an E2 ubiquitin-conjugating enzyme in the form of a thioester and then directly transfer the ubiquitin to targeted substrates. May be involved in T-cell proliferation by regulating LIF secretion. May play a role in lysosome homeostasis. Promotes 'Lys-6', 'Lys-11' and 'Lys-63'-linked mixed polyubiquitination on ATG14 leading to the inhibition of autophagy by impairing the interaction between ATG14 and STX7. Participates in the dopamine-mediated negative regulation of the NLRP3 inflammasome by promoting its uibiquitination and subsequent degradation. The chain is E3 ubiquitin-protein ligase MARCHF7 (MARCHF7) from Pongo abelii (Sumatran orangutan).